The following is a 360-amino-acid chain: uncharacterized protein (360 aa).

In terms of domain architecture, ABC transporter spans 4 to 235 (LSLQHIQKIY…PANMFVAGFI (232 aa)). Residue 37 to 44 (GPSGCGKS) participates in ATP binding.

The protein belongs to the ABC transporter superfamily.

This is an uncharacterized protein from Escherichia coli O157:H7.